Here is a 147-residue protein sequence, read N- to C-terminus: Deoxyuridine 5'-triphosphate nucleotidohydrolase (147 aa).

Arg-24 contacts Mg(2+). DUTP is bound by residues Pro-68–Ser-70, Gly-82–Asp-85, Tyr-88, Gly-93, Ile-95, and Arg-111.

This sequence belongs to the dUTPase family. Mg(2+) serves as cofactor.

It carries out the reaction dUTP + H2O = dUMP + diphosphate + H(+). In terms of biological role, this enzyme is involved in nucleotide metabolism: it produces dUMP, the immediate precursor of thymidine nucleotides and it decreases the intracellular concentration of dUTP so that uracil cannot be incorporated into DNA. The sequence is that of Deoxyuridine 5'-triphosphate nucleotidohydrolase (OPG046) from Bos taurus (Bovine).